A 754-amino-acid chain; its full sequence is Phosphoribosylformylglycinamidine synthase subunit PurL (754 aa).

The segment at 1–21 is disordered; that stretch reads MLDTVEHAATTPDQPQPYGEL. Residue H54 is part of the active site. The ATP site is built by Y57 and K101. Position 103 (E103) interacts with Mg(2+). Substrate contacts are provided by residues 104–107 and R126; that span reads SHNH. The active-site Proton acceptor is H105. D127 provides a ligand contact to Mg(2+). Q252 contacts substrate. D280 contacts Mg(2+). 324 to 326 serves as a coordination point for substrate; sequence ESQ. Residues N512 and G549 each contribute to the ATP site. N550 is a binding site for Mg(2+). S552 provides a ligand contact to substrate.

The protein belongs to the FGAMS family. In terms of assembly, monomer. Part of the FGAM synthase complex composed of 1 PurL, 1 PurQ and 2 PurS subunits.

The protein localises to the cytoplasm. The enzyme catalyses N(2)-formyl-N(1)-(5-phospho-beta-D-ribosyl)glycinamide + L-glutamine + ATP + H2O = 2-formamido-N(1)-(5-O-phospho-beta-D-ribosyl)acetamidine + L-glutamate + ADP + phosphate + H(+). Its pathway is purine metabolism; IMP biosynthesis via de novo pathway; 5-amino-1-(5-phospho-D-ribosyl)imidazole from N(2)-formyl-N(1)-(5-phospho-D-ribosyl)glycinamide: step 1/2. Its function is as follows. Part of the phosphoribosylformylglycinamidine synthase complex involved in the purines biosynthetic pathway. Catalyzes the ATP-dependent conversion of formylglycinamide ribonucleotide (FGAR) and glutamine to yield formylglycinamidine ribonucleotide (FGAM) and glutamate. The FGAM synthase complex is composed of three subunits. PurQ produces an ammonia molecule by converting glutamine to glutamate. PurL transfers the ammonia molecule to FGAR to form FGAM in an ATP-dependent manner. PurS interacts with PurQ and PurL and is thought to assist in the transfer of the ammonia molecule from PurQ to PurL. The protein is Phosphoribosylformylglycinamidine synthase subunit PurL of Mycobacterium bovis (strain ATCC BAA-935 / AF2122/97).